We begin with the raw amino-acid sequence, 257 residues long: Molybdate-binding protein ModA (257 aa).

The first 24 residues, 1 to 24 (MARKWLNLFAGAALSFAVAGNALA), serve as a signal peptide directing secretion. Residues S36, S63, A149, V176, and Y194 each coordinate molybdate.

It belongs to the bacterial solute-binding protein ModA family. In terms of assembly, the complex is composed of two ATP-binding proteins (ModC), two transmembrane proteins (ModB) and a solute-binding protein (ModA).

Its subcellular location is the periplasm. Functionally, part of the ABC transporter complex ModABC involved in the transport of molybdenum into the cell. Binds molybdate with high affinity in vitro and with a similar affinity in vivo. Binds tungstate with high affinity in vitro. Binds unnatural anion perrhenate with high affinity in vitro. Does not bind sulfate, phosphate, arsenate, selenate, chlorate, metavanadate, nitrate, perchlorate, permanganate or carbonate. This chain is Molybdate-binding protein ModA (modA), found in Escherichia coli (strain K12).